A 96-amino-acid polypeptide reads, in one-letter code: MDIRNIIKRPIVTEKAVLMKEKSNKYTFVVDKSANKFQIKYAVETLFNVKVKSVHTSNCVGKSLKVGRYAAGYRSDWKKAIVKLGKGQEIQLADKV.

Belongs to the universal ribosomal protein uL23 family. As to quaternary structure, part of the 50S ribosomal subunit. Contacts protein L29, and trigger factor when it is bound to the ribosome.

Its function is as follows. One of the early assembly proteins it binds 23S rRNA. One of the proteins that surrounds the polypeptide exit tunnel on the outside of the ribosome. Forms the main docking site for trigger factor binding to the ribosome. The protein is Large ribosomal subunit protein uL23 of Endomicrobium trichonymphae.